Here is a 175-residue protein sequence, read N- to C-terminus: CASP-like protein 2C1 (175 aa).

The Cytoplasmic segment spans residues 1-7; the sequence is MVKLRET. A helical transmembrane segment spans residues 8-28; sequence EVILRLCIVFFLLLTSCLIGL. Topologically, residues 29 to 45 are extracellular; the sequence is DSQTKEIAYIHKNVSFR. Asn41 carries N-linked (GlcNAc...) asparagine glycosylation. The helical transmembrane segment at 46–66 threads the bilayer; the sequence is YLLALEAELYIDVVVAAYNLV. Residues 67-91 are Cytoplasmic-facing; sequence QLGLGWYNVEQKTSNPKWFSYLLDQ. A helical transmembrane segment spans residues 92-112; that stretch reads TAAYVVFAGTSAAAQHSLLVV. At 113–136 the chain is on the extracellular side; the sequence is TGSRELQWMKWCYKFTRFCFQMGS. The helical transmembrane segment at 137–157 threads the bilayer; it reads AIILNYIAAALMVLLSSISAF. Residues 158–175 are Cytoplasmic-facing; sequence NLFRLYSPKRFFRFKSSS.

Belongs to the Casparian strip membrane proteins (CASP) family. In terms of assembly, homodimer and heterodimers.

The protein resides in the cell membrane. The sequence is that of CASP-like protein 2C1 from Arabidopsis thaliana (Mouse-ear cress).